The sequence spans 315 residues: Annexin Gh1 (315 aa).

4 Annexin repeats span residues 10-81 (PSVS…LWAL), 82-153 (DPAE…PLVS), 165-236 (TLAK…STVK), and 240-311 (YPEK…VLAG). Ca(2+)-binding residues include Phe23, Gly25, Gly27, and Glu67. The Ca(2+) site is built by Ile253, Arg255, Gly257, Val295, Asp297, Thr298, and Glu303.

Belongs to the annexin family. Monomer. Trimer. Oligomerization is calcium-independent. Disassembly of the oligomers seems to be required for calcium-binding.

Its subcellular location is the membrane. Binds to phospholipid vesicles in a calcium-dependent manner in vitro. Prefers phosphatidyl-serine containing membranes. May have a role in the membrane cytoskeleton scaffolding or exocytotic processes. May be involved in oxidative stress response. The sequence is that of Annexin Gh1 from Gossypium hirsutum (Upland cotton).